Reading from the N-terminus, the 101-residue chain is MMFEHVLFLSVYLFSIGIYGLITSRNMVRALICLELILNSINLNLVTFSDLFDSRQLKGDIFAIFVIALAAAEAAIGLSILSSIHRNRKSTRINQSNLLNN.

3 consecutive transmembrane segments (helical) span residues methionine 2–isoleucine 22, isoleucine 32–phenylalanine 52, and isoleucine 61–leucine 81.

It belongs to the complex I subunit 4L family. As to quaternary structure, NDH is composed of at least 16 different subunits, 5 of which are encoded in the nucleus.

It localises to the plastid. It is found in the chloroplast thylakoid membrane. The catalysed reaction is a plastoquinone + NADH + (n+1) H(+)(in) = a plastoquinol + NAD(+) + n H(+)(out). The enzyme catalyses a plastoquinone + NADPH + (n+1) H(+)(in) = a plastoquinol + NADP(+) + n H(+)(out). In terms of biological role, NDH shuttles electrons from NAD(P)H:plastoquinone, via FMN and iron-sulfur (Fe-S) centers, to quinones in the photosynthetic chain and possibly in a chloroplast respiratory chain. The immediate electron acceptor for the enzyme in this species is believed to be plastoquinone. Couples the redox reaction to proton translocation, and thus conserves the redox energy in a proton gradient. This chain is NAD(P)H-quinone oxidoreductase subunit 4L, chloroplastic, found in Agrostis stolonifera (Creeping bentgrass).